The following is a 59-amino-acid chain: uncharacterized protein (59 aa).

This is an uncharacterized protein from Acidianus convivator (ATV).